A 340-amino-acid polypeptide reads, in one-letter code: Protein pelota homolog (340 aa).

It belongs to the eukaryotic release factor 1 family. Pelota subfamily. As to quaternary structure, monomer. The cofactor is a divalent metal cation.

The protein resides in the cytoplasm. Functionally, may function in recognizing stalled ribosomes, interact with stem-loop structures in stalled mRNA molecules, and effect endonucleolytic cleavage of the mRNA. May play a role in the release non-functional ribosomes and degradation of damaged mRNAs. Has endoribonuclease activity. The sequence is that of Protein pelota homolog from Methanosphaerula palustris (strain ATCC BAA-1556 / DSM 19958 / E1-9c).